The following is an 886-amino-acid chain: Protein translocase subunit SecA (886 aa).

Residues Q85, 103–107, and D492 each bind ATP; that span reads GEGKT. Over residues 841 to 864 the composition is skewed to basic and acidic residues; the sequence is RVVENRYAEEGPKQPARRENKVGR. The disordered stretch occupies residues 841–866; sequence RVVENRYAEEGPKQPARRENKVGRND. 4 residues coordinate Zn(2+): C868, C870, C879, and C880.

This sequence belongs to the SecA family. Monomer and homodimer. Part of the essential Sec protein translocation apparatus which comprises SecA, SecYEG and auxiliary proteins SecDF. Other proteins may also be involved. It depends on Zn(2+) as a cofactor.

The protein resides in the cell membrane. It is found in the cytoplasm. It catalyses the reaction ATP + H2O + cellular proteinSide 1 = ADP + phosphate + cellular proteinSide 2.. Its function is as follows. Part of the Sec protein translocase complex. Interacts with the SecYEG preprotein conducting channel. Has a central role in coupling the hydrolysis of ATP to the transfer of proteins into and across the cell membrane, serving as an ATP-driven molecular motor driving the stepwise translocation of polypeptide chains across the membrane. This chain is Protein translocase subunit SecA, found in Pelotomaculum thermopropionicum (strain DSM 13744 / JCM 10971 / SI).